The sequence spans 81 residues: Defensin-like protein b (81 aa).

The N-terminal stretch at 1 to 26 (MRNATFFIVFYVFISLVLSNVQDVTA) is a signal peptide. 4 disulfides stabilise this stretch: C31–C81, C42–C66, C50–C76, and C64–C78.

Belongs to the DEFL family. Expressed in microspores and in young and mature anthers.

The protein resides in the secreted. In terms of biological role, involved in self-incompatibility. In Arabidopsis lyrata (Lyre-leaved rock-cress), this protein is Defensin-like protein b (SCRb-1).